The sequence spans 339 residues: Fructose-1,6-bisphosphatase class 1 (339 aa).

4 residues coordinate Mg(2+): Glu94, Asp116, Leu118, and Asp119. Residues 119–122, Asn210, and Lys276 contribute to the substrate site; that span reads DGSS. Glu282 serves as a coordination point for Mg(2+).

The protein belongs to the FBPase class 1 family. Homotetramer. Mg(2+) serves as cofactor.

The protein localises to the cytoplasm. The catalysed reaction is beta-D-fructose 1,6-bisphosphate + H2O = beta-D-fructose 6-phosphate + phosphate. It participates in carbohydrate biosynthesis; gluconeogenesis. The chain is Fructose-1,6-bisphosphatase class 1 from Burkholderia ambifaria (strain MC40-6).